Here is a 904-residue protein sequence, read N- to C-terminus: Disintegrin and metalloproteinase domain-containing protein 22 (904 aa).

A signal peptide spans methionine 1–cysteine 23. Residues glycine 24 to arginine 223 constitute a propeptide that is removed on maturation. At glycine 24–asparagine 734 the chain is on the extracellular side. Asparagine 163 is a glycosylation site (N-linked (GlcNAc...) asparagine). The Peptidase M12B domain maps to lysine 237 to proline 436. 17 disulfide bridges follow: cysteine 347–cysteine 431, cysteine 390–cysteine 415, cysteine 392–cysteine 399, cysteine 445–cysteine 475, cysteine 456–cysteine 472, cysteine 458–cysteine 464, cysteine 471–cysteine 492, cysteine 483–cysteine 489, cysteine 488–cysteine 514, cysteine 501–cysteine 521, cysteine 508–cysteine 540, cysteine 533–cysteine 545, cysteine 552–cysteine 603, cysteine 567–cysteine 633, cysteine 581–cysteine 591, cysteine 598–cysteine 661, and cysteine 655–cysteine 666. One can recognise a Disintegrin domain in the interval proline 442 to aspartate 529. N-linked (GlcNAc...) asparagine glycosylation is present at asparagine 517. Residue asparagine 632 is glycosylated (N-linked (GlcNAc...) asparagine). Asparagine 673 carries an N-linked (GlcNAc...) asparagine glycan. One can recognise an EGF-like domain in the interval asparagine 673–glycine 710. 3 disulfides stabilise this stretch: cysteine 677–cysteine 692, cysteine 686–cysteine 698, and cysteine 700–cysteine 709. The chain crosses the membrane as a helical span at residues isoleucine 735–alanine 755. Over tryptophan 756–glutamate 857 the chain is Cytoplasmic. Residues glutamine 769–isoleucine 904 are disordered. Residues glycine 789–serine 808 are compositionally biased toward low complexity. Serine 808, lysine 817, and serine 832 each carry phosphoserine. Residues tryptophan 809–arginine 827 show a composition bias toward basic and acidic residues. Positions asparagine 840–proline 851 are enriched in basic residues. Phosphoserine occurs at positions 855, 860, 864, 868, and 882. Over residues serine 860–serine 875 the composition is skewed to low complexity.

As to quaternary structure, interacts with LGI1. Can bind to LGI4. Interacts with KCNA2, DLG2 and DLG4. Interacts with ADAM11. Interacts (via C-terminus) with YWHAB/14-3-3 beta. Interacts (via C-terminus) with YWHAZ/14-3-3 zeta. Post-translationally, the precursor is cleaved by a furin endopeptidase. Detected in juxtaparanodal zones in the central nervous system and at nerve terminal plexuses of basket cells in the cerebellum (at protein level). Expressed at high levels in the brain. Strongly expressed in cerebellar granule cells and hippocampus. In spinal cord, expression is restricted to gray matter.

It localises to the cell membrane. The protein resides in the cell projection. The protein localises to the axon. Its function is as follows. Probable ligand for integrin in the brain. This is a non catalytic metalloprotease-like protein. Involved in regulation of cell adhesion and spreading and in inhibition of cell proliferation. Neuronal receptor for LGI1. This Mus musculus (Mouse) protein is Disintegrin and metalloproteinase domain-containing protein 22 (Adam22).